The primary structure comprises 167 residues: MAPSTVAVEMLSPKEKNRLRKPVVEKMRRDRINSSIEQLKLLLEQEFARHQPNSKLEKADILEMAVSYLKHSKAFAAAAGPKSLHQDYSEGYSWCLQEAVQFLTLHAASDTQMKLLYHFQRPPAPAAPAKEPPAPGAAPQPARSSAKAAAAAVSTSRQPACGLWRPW.

Positions 16–72 (KNRLRKPVVEKMRRDRINSSIEQLKLLLEQEFARHQPNSKLEKADILEMAVSYLKHS) constitute a bHLH domain. Residues 88–119 (YSEGYSWCLQEAVQFLTLHAASDTQMKLLYHF) enclose the Orange domain. A compositionally biased stretch (pro residues) spans 124–138 (APAAPAKEPPAPGAA). The tract at residues 124-167 (APAAPAKEPPAPGAAPQPARSSAKAAAAAVSTSRQPACGLWRPW) is disordered. A compositionally biased stretch (low complexity) spans 139 to 160 (PQPARSSAKAAAAAVSTSRQPA). The WRPW motif signature appears at 164 to 167 (WRPW).

As to quaternary structure, transcription repression requires formation of a complex with a corepressor protein of the Groucho/TLE family.

The protein localises to the nucleus. Its function is as follows. Transcriptional repressor of genes that require a bHLH protein for their transcription. Plays an important role as neurogenesis negative regulator. This Mus musculus (Mouse) protein is Transcription factor HES-5 (Hes5).